The sequence spans 433 residues: Protein disulfide-isomerase A6 homolog (433 aa).

The N-terminal stretch at 1-19 is a signal peptide; sequence MRQLASILLLAFVVGSVSA. Thioredoxin domains follow at residues 20–119 and 120–267; these read FYSP…GQRT and AKAI…KHVA. Active-site nucleophile residues include C55, C58, C186, and C189. 2 disulfides stabilise this stretch: C55/C58 and C186/C189. The N-linked (GlcNAc...) asparagine glycan is linked to N279. Positions 405–433 are disordered; it reads VDPWDGKDGQLPTEEDIDLSDIDLDKDEL. Over residues 417-433 the composition is skewed to acidic residues; that stretch reads TEEDIDLSDIDLDKDEL. Residues 430–433 carry the Prevents secretion from ER motif; sequence KDEL.

It belongs to the protein disulfide isomerase family. In terms of assembly, interacts with Drpr (via extracellular region). In the blastoderm embryo, expression starts at the anterior and posterior poles and later appears as broad stripes. Following gastrulation, expressed in midline precursor cells and the posterior head with low levels present throughout the embryo. During germ band extension, weak dorsoventral stripes of expression are evident. Midline expression begins and is retained throughout embryogenesis in clusters of cells in each segment in the central nervous system. At least some of the midline expression occurs in VUM neurons.

Its subcellular location is the endoplasmic reticulum lumen. The protein resides in the cell surface. The catalysed reaction is Catalyzes the rearrangement of -S-S- bonds in proteins.. Functionally, binds to both apoptotic cells and phagocytes and promotes Drpr-dependent phagocytosis of apoptotic cells. The sequence is that of Protein disulfide-isomerase A6 homolog from Drosophila melanogaster (Fruit fly).